Reading from the N-terminus, the 689-residue chain is Glycine--tRNA ligase beta subunit (689 aa).

It belongs to the class-II aminoacyl-tRNA synthetase family. In terms of assembly, tetramer of two alpha and two beta subunits.

It is found in the cytoplasm. The catalysed reaction is tRNA(Gly) + glycine + ATP = glycyl-tRNA(Gly) + AMP + diphosphate. In Shigella dysenteriae serotype 1 (strain Sd197), this protein is Glycine--tRNA ligase beta subunit.